Reading from the N-terminus, the 142-residue chain is Photosystem II extrinsic protein U (142 aa).

The signal sequence occupies residues M1–A29.

This sequence belongs to the PsbU family. PSII is composed of 1 copy each of membrane proteins PsbA, PsbB, PsbC, PsbD, PsbE, PsbF, PsbH, PsbI, PsbJ, PsbK, PsbL, PsbM, PsbT, PsbX, PsbY, PsbZ, Psb30/Ycf12, peripheral proteins PsbO, CyanoQ (PsbQ), PsbU, PsbV and a large number of cofactors. It forms dimeric complexes.

Its subcellular location is the cellular thylakoid membrane. One of the extrinsic, lumenal subunits of photosystem II (PSII). PSII is a light-driven water plastoquinone oxidoreductase, using light energy to abstract electrons from H(2)O, generating a proton gradient subsequently used for ATP formation. The extrinsic proteins stabilize the structure of photosystem II oxygen-evolving complex (OEC), the ion environment of oxygen evolution and protect the OEC against heat-induced inactivation. This is Photosystem II extrinsic protein U from Nostoc sp. (strain PCC 7120 / SAG 25.82 / UTEX 2576).